The sequence spans 441 residues: Protein MONOCULM 1 (441 aa).

The tract at residues 1–33 (MLRSLHSSSSSDTDNNSGGCKNNGGGGGEAAAA) is disordered. A compositionally biased stretch (low complexity) spans 7–20 (SSSSSDTDNNSGGC). The segment covering 21 to 33 (KNNGGGGGEAAAA) has biased composition (gly residues). The region spanning 41 to 437 (RAVAAAAPST…RPLLSVSAWQ (397 aa)) is the GRAS domain. A leucine repeat I (LRI) region spans residues 48–126 (PSTRDLLLAC…GAARPASSGA (79 aa)). Residues 127–195 (YLAFNQIAPF…LGPPEVRVTG (69 aa)) form a VHIID region. Positions 158–162 (VHILD) match the VHIID motif. The interval 205-256 (RTGNRLRAFARSIHLPFHFTPLLLSCATTAPHHVAGTSTGAAAAASTAAAAT) is leucine repeat II (LRII). The PFYRE stretch occupies residues 266 to 361 (LAVNCVMFLH…QEVLGREIEA (96 aa)). Positions 364–437 (GPSGGRWWRG…RPLLSVSAWQ (74 aa)) are SAW.

The protein belongs to the GRAS family. As to expression, expressed in a small number of epidermal or subepidermal cells at the leaf axils, in axillary meristems and the entire tiller buds. Undetected in the shoot apical meristem.

The protein localises to the nucleus. Putative transcription regulator that controls rice tillering by initiating axillary buds and promoting their outgrowth. Rice tiller is a specialized grain-bearing branch that is formed on the unelongated basal internode and grows independently of the mother stem (culm) by means of its own adventitious roots. The sequence is that of Protein MONOCULM 1 from Oryza sativa subsp. japonica (Rice).